We begin with the raw amino-acid sequence, 134 residues long: Ribosome-binding factor A (134 aa).

This sequence belongs to the RbfA family. Monomer. Binds 30S ribosomal subunits, but not 50S ribosomal subunits or 70S ribosomes.

The protein resides in the cytoplasm. Its function is as follows. One of several proteins that assist in the late maturation steps of the functional core of the 30S ribosomal subunit. Associates with free 30S ribosomal subunits (but not with 30S subunits that are part of 70S ribosomes or polysomes). Required for efficient processing of 16S rRNA. May interact with the 5'-terminal helix region of 16S rRNA. The chain is Ribosome-binding factor A from Rhizobium etli (strain CIAT 652).